Reading from the N-terminus, the 207-residue chain is Dephospho-CoA kinase (207 aa).

The region spanning 4-203 (VIGLTGGIAS…EEGYIEKPNY (200 aa)) is the DPCK domain. Residue 12 to 17 (ASGKST) participates in ATP binding.

The protein belongs to the CoaE family.

It localises to the cytoplasm. The catalysed reaction is 3'-dephospho-CoA + ATP = ADP + CoA + H(+). It participates in cofactor biosynthesis; coenzyme A biosynthesis; CoA from (R)-pantothenate: step 5/5. In terms of biological role, catalyzes the phosphorylation of the 3'-hydroxyl group of dephosphocoenzyme A to form coenzyme A. The protein is Dephospho-CoA kinase of Staphylococcus aureus (strain MRSA252).